Reading from the N-terminus, the 875-residue chain is Valine--tRNA ligase (875 aa).

Positions 44-54 match the 'HIGH' region motif; the sequence is PNVTGKLHLGH. Residues 520–524 carry the 'KMSKS' region motif; sequence KMSKS. Lysine 523 serves as a coordination point for ATP. Positions 804 to 875 form a coiled coil; it reads LEGLINIEEE…VRARLAQLKQ (72 aa).

The protein belongs to the class-I aminoacyl-tRNA synthetase family. ValS type 1 subfamily. As to quaternary structure, monomer.

The protein resides in the cytoplasm. It catalyses the reaction tRNA(Val) + L-valine + ATP = L-valyl-tRNA(Val) + AMP + diphosphate. Functionally, catalyzes the attachment of valine to tRNA(Val). As ValRS can inadvertently accommodate and process structurally similar amino acids such as threonine, to avoid such errors, it has a 'posttransfer' editing activity that hydrolyzes mischarged Thr-tRNA(Val) in a tRNA-dependent manner. The sequence is that of Valine--tRNA ligase from Anoxybacillus flavithermus (strain DSM 21510 / WK1).